Here is a 140-residue protein sequence, read N- to C-terminus: Peptidyl-prolyl cis-trans isomerase FKBP2 (140 aa).

The first 20 residues, 1–20 (MRLSWVLTVLSICLSALVTA), serve as a signal peptide directing secretion. A PPIase FKBP-type domain is found at 47 to 135 (GDVLHMHYTG…VFEVELLKIE (89 aa)).

The protein belongs to the FKBP-type PPIase family. FKBP2 subfamily. In terms of assembly, interacts with ARFGEF1/BIG1 and the C-terminal of EPB41L2.

It localises to the endoplasmic reticulum membrane. The catalysed reaction is [protein]-peptidylproline (omega=180) = [protein]-peptidylproline (omega=0). Its activity is regulated as follows. Inhibited by both FK506 and rapamycin. Functionally, PPIases accelerate the folding of proteins. It catalyzes the cis-trans isomerization of proline imidic peptide bonds in oligopeptides. This chain is Peptidyl-prolyl cis-trans isomerase FKBP2 (FKBP2), found in Bos taurus (Bovine).